The chain runs to 274 residues: Large ribosomal subunit protein uL2 (274 aa).

The tract at residues 223 to 274 (VAMNPVDHPHGGGEGRTSGGRHPVTPWGVPTKGYKTRSNKRTDKYIVRRRNK) is disordered.

The protein belongs to the universal ribosomal protein uL2 family. As to quaternary structure, part of the 50S ribosomal subunit. Forms a bridge to the 30S subunit in the 70S ribosome.

Its function is as follows. One of the primary rRNA binding proteins. Required for association of the 30S and 50S subunits to form the 70S ribosome, for tRNA binding and peptide bond formation. It has been suggested to have peptidyltransferase activity; this is somewhat controversial. Makes several contacts with the 16S rRNA in the 70S ribosome. This chain is Large ribosomal subunit protein uL2, found in Shewanella oneidensis (strain ATCC 700550 / JCM 31522 / CIP 106686 / LMG 19005 / NCIMB 14063 / MR-1).